A 446-amino-acid polypeptide reads, in one-letter code: Histone acetyltransferase ESA1 (446 aa).

The 52-residue stretch at 24-75 (IKCQCWVRKDEEERLAEILSINARVSPSKFYVHYVNFNKRLDEWVTGDRINL) folds into the Tudor-knot domain. A disordered region spans residues 86–121 (RQLEEDTNKKQKKKKKFPQKAAVVESDAKSSEMGEG). Positions 163 to 434 (AHVRNLSKII…IDAEKLLWKP (272 aa)) constitute an MYST-type HAT domain. The segment at 196 to 221 (VYIDDFTLQYFGSRKQYERYRKKCTL) adopts a C2HC MYST-type; degenerate zinc-finger fold. The ESA1-RPD3 motif motif lies at 246-267 (RTWCRNLCLLSKLFLDHKTLYY). Lysine 263 bears the N6-acetyllysine; by autocatalysis mark. Acetyl-CoA is bound by residues 304–308 (ACILT) and 313–319 (QRMGYGR). The active-site Proton donor/acceptor is the glutamate 339. Residue serine 343 participates in acetyl-CoA binding.

It belongs to the MYST (SAS/MOZ) family. Component of the NuA4 histone acetyltransferase complex. Post-translationally, autoacetylation at Lys-263 is required for proper function.

The protein resides in the nucleus. The protein localises to the chromosome. It catalyses the reaction L-lysyl-[histone] + acetyl-CoA = N(6)-acetyl-L-lysyl-[histone] + CoA + H(+). It carries out the reaction L-lysyl-[protein] + acetyl-CoA = N(6)-acetyl-L-lysyl-[protein] + CoA + H(+). The enzyme catalyses 2-hydroxyisobutanoyl-CoA + L-lysyl-[protein] = N(6)-(2-hydroxyisobutanoyl)-L-lysyl-[protein] + CoA + H(+). The catalysed reaction is (2E)-butenoyl-CoA + L-lysyl-[protein] = N(6)-(2E)-butenoyl-L-lysyl-[protein] + CoA + H(+). Catalytic component of the NuA4 histone acetyltransferase (HAT) complex which is involved in epigenetic transcriptional activation of selected genes principally by acetylation of nucleosomal histones H4, H3, H2B, H2A and H2A variant H2A.Z. Acetylates histone H4 to form H4K5ac, H4K8ac, H4K12ac and H4K16ac, histone H3 to form H3K14ac, and histone H2A to form H2AK4ac and H2AK7ac. The NuA4 complex is involved in the DNA damage response and is required for chromosome segregation. The NuA4 complex plays a direct role in repair of DNA double-strand breaks (DSBs) through homologous recombination. Recruitment to promoters depends on H3K4me. Also acetylates non-histone proteins. In addition to protein acetyltransferase, can use different acyl-CoA substrates, such as 2-hydroxyisobutanoyl-CoA (2-hydroxyisobutyryl-CoA) or (2E)-butenoyl-CoA (crotonyl-CoA), and is able to mediate protein 2-hydroxyisobutyrylation and crotonylation, respectively. The protein is Histone acetyltransferase ESA1 (ESA1) of Candida glabrata (strain ATCC 2001 / BCRC 20586 / JCM 3761 / NBRC 0622 / NRRL Y-65 / CBS 138) (Yeast).